Reading from the N-terminus, the 228-residue chain is uncharacterized protein (228 aa).

Residues 196-228 (VKITELLDKAKISINDLNKTIEKLNETVNKYHG) are a coiled coil.

This is an uncharacterized protein from Acanthamoeba polyphaga (Amoeba).